The primary structure comprises 179 residues: Adenine phosphoribosyltransferase (179 aa).

The protein belongs to the purine/pyrimidine phosphoribosyltransferase family. In terms of assembly, homodimer.

Its subcellular location is the cytoplasm. The catalysed reaction is AMP + diphosphate = 5-phospho-alpha-D-ribose 1-diphosphate + adenine. It functions in the pathway purine metabolism; AMP biosynthesis via salvage pathway; AMP from adenine: step 1/1. Its function is as follows. Catalyzes a salvage reaction resulting in the formation of AMP, that is energically less costly than de novo synthesis. The polypeptide is Adenine phosphoribosyltransferase (Ruegeria pomeroyi (strain ATCC 700808 / DSM 15171 / DSS-3) (Silicibacter pomeroyi)).